Reading from the N-terminus, the 142-residue chain is Galactose-binding lectin (142 aa).

Residues 1–141 (TYAEVESFGV…GTDIWDLLLL (141 aa)) form the Galectin domain.

Homotetramer.

Its activity is regulated as follows. Cytotoxic activity against L.infantum promastigotes is completely inhibited by D-galactose. Inhibition activity against biofilm formation by S.aureus and S.epidermidis is inhibited by alpha-lactose. Hemagglutination activity is inhibited by alpha-lactose (MIC=100 mM), beta-lactose (MIC=100 mM), lactulose (MIC=100 mM), bovine submaxillary mucin (BSM) (MIC=32 ug/ml), fetuin (MIC=16 ug/ml), porcine stomach mucin (PSM) type 2 (MIC=8 ug/ml) and PSM type 3 (MIC=8 ug/ml). Its function is as follows. Galactose-binding lectin. Displays antibacterial and hemagglutinin activity. Inhibits the growth of L.infantum promastigotes by damaging their membrane integrity and inducing cell apoptosis via the production of reactive oxygen species (ROS). Inhibition of L.infantum promastigotes appears to increase with time (MIC=1.2 uM/ml after 24 hours, MIC=0.9 uM/ml after 48 hours and MIC=0.6 uM/ml after 72 hours). Agglutinates Gram-negative and Gram-positive bacteria including E.coli, S.aureus and S.epidermidis, and inhibits biofilm formation by S.aureus and S.epidermidis. Displays hemagglutination activity towards all types of human erythrocytes (O, A and B) and rabbit erythrocytes. This is Galactose-binding lectin from Chondrilla caribensis (Chicken liver sponge).